The primary structure comprises 195 residues: Dynactin subunit 6 (195 aa).

It belongs to the dynactin subunits 5/6 family. Dynactin subunit 6 subfamily. Member of the pointed-end complex of the dynactin shoulder complex which contains dctn4, dctn5 and dctn6 subunits and Actr10. Within the complex dctn6 forms a heterodimer with dctn5. Interacts with plk1.

It is found in the cytoplasm. The protein localises to the cytoskeleton. It localises to the chromosome. Its subcellular location is the centromere. The protein resides in the kinetochore. Its function is as follows. Part of the dynactin complex that activates the molecular motor dynein for ultra-processive transport along microtubules. The chain is Dynactin subunit 6 (dctn6) from Danio rerio (Zebrafish).